A 474-amino-acid polypeptide reads, in one-letter code: Glutamate--tRNA ligase (474 aa).

A 'HIGH' region motif is present at residues 9 to 19 (PSPTGYLHVGG). Positions 240–244 (KLSKR) match the 'KMSKS' region motif. Lysine 243 is an ATP binding site.

Belongs to the class-I aminoacyl-tRNA synthetase family. Glutamate--tRNA ligase type 1 subfamily. In terms of assembly, monomer.

Its subcellular location is the cytoplasm. The catalysed reaction is tRNA(Glu) + L-glutamate + ATP = L-glutamyl-tRNA(Glu) + AMP + diphosphate. Catalyzes the attachment of glutamate to tRNA(Glu) in a two-step reaction: glutamate is first activated by ATP to form Glu-AMP and then transferred to the acceptor end of tRNA(Glu). The polypeptide is Glutamate--tRNA ligase (Aliivibrio fischeri (strain MJ11) (Vibrio fischeri)).